Reading from the N-terminus, the 336-residue chain is C4-dicarboxylate-binding periplasmic protein DctP (336 aa).

The first 31 residues, 1–31 (MTRLNTCTFIKQIVKMTSIAALLGASLNSWA), serve as a signal peptide directing secretion. Residues lysine 48, lysine 101, arginine 176, asparagine 216, asparagine 220, and tyrosine 243 each coordinate (S)-malate. 6 residues coordinate succinate: lysine 48, lysine 101, arginine 176, asparagine 216, asparagine 220, and tyrosine 243.

This sequence belongs to the bacterial solute-binding protein 7 family. The complex comprises the extracytoplasmic solute receptor protein DctP, and the two transmembrane proteins DctQ and DctM.

The protein resides in the periplasm. Part of the tripartite ATP-independent periplasmic (TRAP) transport system DctPQM involved in C4-dicarboxylates uptake. Required for the utilization of succinate, fumarate, L-malate and alpha-ketoglutarate. Binds succinate and malate. This chain is C4-dicarboxylate-binding periplasmic protein DctP, found in Shewanella loihica (strain ATCC BAA-1088 / PV-4).